Consider the following 335-residue polypeptide: S-adenosylmethionine:tRNA ribosyltransferase-isomerase (335 aa).

Belongs to the QueA family. Monomer.

The protein localises to the cytoplasm. The enzyme catalyses 7-aminomethyl-7-carbaguanosine(34) in tRNA + S-adenosyl-L-methionine = epoxyqueuosine(34) in tRNA + adenine + L-methionine + 2 H(+). The protein operates within tRNA modification; tRNA-queuosine biosynthesis. Transfers and isomerizes the ribose moiety from AdoMet to the 7-aminomethyl group of 7-deazaguanine (preQ1-tRNA) to give epoxyqueuosine (oQ-tRNA). The polypeptide is S-adenosylmethionine:tRNA ribosyltransferase-isomerase (Thermotoga petrophila (strain ATCC BAA-488 / DSM 13995 / JCM 10881 / RKU-1)).